The chain runs to 316 residues: DDRGK domain-containing protein 1 (316 aa).

The Lumenal segment spans residues Met-1–Glu-3. Residues Leu-4–Leu-24 traverse the membrane as a helical segment. Over Arg-25 to Ala-316 the chain is Cytoplasmic. Residues Leu-147–Glu-187 form a disordered region.

Belongs to the DDRGK1 family.

The protein localises to the endoplasmic reticulum membrane. In terms of biological role, substrate adapter for ufmylation, the covalent attachment of the ubiquitin-like modifier UFM1 to substrate proteins. The polypeptide is DDRGK domain-containing protein 1 (Brugia malayi (Filarial nematode worm)).